The following is an 812-amino-acid chain: DNA translocase FtsK 1 (812 aa).

The span at 1–11 (MTEKSHKKTAK) shows a compositional bias: basic residues. The segment at 1 to 36 (MTEKSHKKTAKGRAGSPSPTSARNKKADNGARGNKV) is disordered. Positions 25–36 (KKADNGARGNKV) are enriched in basic and acidic residues. The next 5 helical transmembrane spans lie at 63-83 (IGDALWLMGLAATLYLVISLI), 116-136 (VGYYLFGWSFWWWIAAACVML), 156-176 (IAAAALFVLTVFSPVLEYFVL), 184-204 (LPVGAGGMVGIRVGAVFAWLL), and 210-230 (LLIILVVLLLSLSLLVQISWL). Residues 231 to 812 (EFLNGAGRAV…RKILAHKDHL (582 aa)) lie on the Cytoplasmic side of the membrane. The FtsK domain maps to 461–670 (GTPVVGDLAK…FTVQSKIDSR (210 aa)). Residue 481–486 (GSGKSV) participates in ATP binding.

Belongs to the FtsK/SpoIIIE/SftA family. Homohexamer. Forms a ring that surrounds DNA.

It localises to the cell inner membrane. Its function is as follows. Essential cell division protein that coordinates cell division and chromosome segregation. The N-terminus is involved in assembly of the cell-division machinery. The C-terminus functions as a DNA motor that moves dsDNA in an ATP-dependent manner towards the dif recombination site, which is located within the replication terminus region. Translocation stops specifically at Xer-dif sites, where FtsK interacts with the Xer recombinase, allowing activation of chromosome unlinking by recombination. FtsK orienting polar sequences (KOPS) guide the direction of DNA translocation. FtsK can remove proteins from DNA as it translocates, but translocation stops specifically at XerCD-dif site, thereby preventing removal of XerC and XerD from dif. This chain is DNA translocase FtsK 1 (ftsK1), found in Neisseria meningitidis serogroup A / serotype 4A (strain DSM 15465 / Z2491).